We begin with the raw amino-acid sequence, 1033 residues long: SIT4-associating protein SAP190 (1033 aa).

Disordered stretches follow at residues 32–82 (DQDD…TTES), 147–213 (PEII…QVET), 768–813 (FGND…HDSG), and 828–1033 (ENEE…KEAF). The span at 158–170 (ILIERDRKDKKED) shows a compositional bias: basic and acidic residues. Over residues 171–182 (AEEGGDSEETTN) the composition is skewed to acidic residues. Residues 183 to 195 (DSDHDSGDERSVD) show a composition bias toward basic and acidic residues. S774 carries the phosphoserine modification. Composition is skewed to acidic residues over residues 784-793 (SEDIIGDTEG) and 828-838 (ENEEDYAEYSD). 3 positions are modified to phosphoserine: S857, S862, and S892. Residues 858–879 (DDGKSKSAESEFTDKISEHRDG) are compositionally biased toward basic and acidic residues. The segment covering 909–924 (SRSQPSDPKLQDQNIF) has biased composition (polar residues). Residues 932-944 (GVGDDDDYMDPND) show a composition bias toward acidic residues. The residue at position 990 (T990) is a Phosphothreonine. S991 carries the post-translational modification Phosphoserine. Positions 1000–1018 (ISSDEEDSEDEDEENDMGN) are enriched in acidic residues.

The protein belongs to the SAPS family. As to quaternary structure, associates with the SIT4 protein phosphatase catalytic subunit in a cell-cycle-dependent manner. Hyperphosphorylated in the absence of SIT4.

The protein resides in the cytoplasm. In terms of biological role, positive regulator of protein phosphatase SIT4. Involved in the general amino acid control (GAAC) response regulated by TOR. Involved in the dephosphorylation of the elongator complex subunit IKI3. The sequence is that of SIT4-associating protein SAP190 (SAP190) from Saccharomyces cerevisiae (strain Lalvin EC1118 / Prise de mousse) (Baker's yeast).